Here is a 1642-residue protein sequence, read N- to C-terminus: Cortactin-binding protein 2 (1642 aa).

5 disordered regions span residues 1–27, 203–222, 366–433, 446–471, and 491–611; these read MATD…AEAA, KKKT…RSTE, IGAS…HPGL, GSNA…SPTS, and RFTS…PSID. The stretch at 119 to 276 forms a coiled coil; that stretch reads RKMQERMSTQ…EQLKRGTDSK (158 aa). The segment covering 385–394 has biased composition (polar residues); sequence GPSTGSTADL. Positions 395 to 407 are enriched in low complexity; it reads TSSPTPVPSTVSP. At R491 the chain carries Asymmetric dimethylarginine. Pro residues predominate over residues 497–506; the sequence is AGAPPRPGAP. Polar residues predominate over residues 576–586; it reads TVASPPSTLPQ. 6 ANK repeats span residues 702-732, 736-765, 769-798, 802-831, 835-864, and 904-934; these read GRPT…DINY, DGHS…QVNA, NGFT…NINH, GGQT…DRSV, DGWT…PAHG, and EGWT…EPER. Residues 1441 to 1469 form a disordered region; it reads SGAWRKVSTSPRKKSGRFSSPTWNKPDLS. Phosphoserine is present on S1513. The segment at 1545 to 1642 is disordered; it reads LRRFDSSGNN…NSRDLEPTQK (98 aa). Polar residues-rich tracts occupy residues 1552–1563 and 1571–1588; these read GNNPVFSATVNN and KEVS…SNSK. Residues 1613–1627 show a composition bias toward low complexity; the sequence is SQNTKRSSSSSNTRQ.

As to quaternary structure, interacts with CTTN/cortactin SH3 domain. Interacts with STRN, STRN4/zinedin and MOB4/phocein; this interactions mediate the association with the STRIPAK core complex and may regulate dendritic spine distribution of the STRIPAK complex in hippocampal neurons. Activation of glutamate receptors weakens the interaction with STRN and STRN4.

The protein localises to the cytoplasm. Its subcellular location is the cell cortex. It localises to the cell projection. The protein resides in the dendritic spine. Regulates the dendritic spine distribution of CTTN/cortactin in hippocampal neurons, and thus controls dendritic spinogenesis and dendritic spine maintenance. Associates with the striatin-interacting phosphatase and kinase (STRIPAK) core complex to regulate dendritic spine distribution of the STRIPAK complex in hippocampal neurons. In Muntiacus muntjak (Barking deer), this protein is Cortactin-binding protein 2 (CTTNBP2).